The following is a 150-amino-acid chain: 3-dehydroquinate dehydratase (150 aa).

Tyrosine 26 acts as the Proton acceptor in catalysis. 3 residues coordinate substrate: asparagine 77, histidine 83, and aspartate 90. The Proton donor role is filled by histidine 103. Residues 104–105 (LS) and arginine 114 contribute to the substrate site.

The protein belongs to the type-II 3-dehydroquinase family. Homododecamer.

The enzyme catalyses 3-dehydroquinate = 3-dehydroshikimate + H2O. The protein operates within metabolic intermediate biosynthesis; chorismate biosynthesis; chorismate from D-erythrose 4-phosphate and phosphoenolpyruvate: step 3/7. Catalyzes a trans-dehydration via an enolate intermediate. This is 3-dehydroquinate dehydratase from Enterobacter sp. (strain 638).